The following is a 134-amino-acid chain: Ribosome-binding factor A (134 aa).

Belongs to the RbfA family. As to quaternary structure, monomer. Binds 30S ribosomal subunits, but not 50S ribosomal subunits or 70S ribosomes.

The protein resides in the cytoplasm. Functionally, one of several proteins that assist in the late maturation steps of the functional core of the 30S ribosomal subunit. Associates with free 30S ribosomal subunits (but not with 30S subunits that are part of 70S ribosomes or polysomes). Required for efficient processing of 16S rRNA. May interact with the 5'-terminal helix region of 16S rRNA. This chain is Ribosome-binding factor A, found in Psychrobacter cryohalolentis (strain ATCC BAA-1226 / DSM 17306 / VKM B-2378 / K5).